Here is a 61-residue protein sequence, read N- to C-terminus: Large ribosomal subunit protein uL30 (61 aa).

Belongs to the universal ribosomal protein uL30 family. As to quaternary structure, part of the 50S ribosomal subunit.

The sequence is that of Large ribosomal subunit protein uL30 from Thermobifida fusca (strain YX).